Reading from the N-terminus, the 409-residue chain is tRNA-specific 2-thiouridylase MnmA (409 aa).

Residues 40–47 and leucine 66 contribute to the ATP site; that span reads GLSGGVDS. Cysteine 127 serves as the catalytic Nucleophile. An intrachain disulfide couples cysteine 127 to cysteine 237. Glycine 152 contributes to the ATP binding site. Residues 156-179 form a disordered region; sequence RIRHREDPEPQQALPGDSSGRHQL. The tract at residues 187–189 is interaction with tRNA; it reads KDQ. The active-site Cysteine persulfide intermediate is cysteine 237. An interaction with tRNA region spans residues 342-343; sequence RY.

The protein belongs to the MnmA/TRMU family.

The protein resides in the cytoplasm. The enzyme catalyses S-sulfanyl-L-cysteinyl-[protein] + uridine(34) in tRNA + AH2 + ATP = 2-thiouridine(34) in tRNA + L-cysteinyl-[protein] + A + AMP + diphosphate + H(+). Its function is as follows. Catalyzes the 2-thiolation of uridine at the wobble position (U34) of tRNA, leading to the formation of s(2)U34. The polypeptide is tRNA-specific 2-thiouridylase MnmA (Prochlorococcus marinus (strain MIT 9303)).